We begin with the raw amino-acid sequence, 137 residues long: Molluscan insulin-related peptide 2 (137 aa).

Positions 1–31 are cleaved as a signal peptide; it reads MVGVRLVFTNAFVVTVLLTLLLDVVVKPAEG. Glutamine 32 carries the post-translational modification Pyrrolidone carboxylic acid. Disulfide bonds link cysteine 47–cysteine 123, cysteine 59–cysteine 136, and cysteine 122–cysteine 127. The propeptide at 71–83 is C-beta peptide like; that stretch reads DAETGWLLPETMV. Positions 86 to 110 are cleaved as a propeptide — C-alpha peptide like; sequence NAETDLDDPLRNIKLSSESALTYLT. Residue glutamine 113 is modified to Pyrrolidone carboxylic acid.

This sequence belongs to the insulin family. Heterodimer of a B chain and an A chain linked by two disulfide bonds. In terms of tissue distribution, expressed in the cerebral light-green cells which are giant neuroendocrines cells involved in the control of growth.

It is found in the cytoplasmic vesicle. Its subcellular location is the secretory vesicle. This chain is Molluscan insulin-related peptide 2, found in Lymnaea stagnalis (Great pond snail).